A 360-amino-acid polypeptide reads, in one-letter code: Peptide chain release factor 1 (360 aa).

Glutamine 235 carries the post-translational modification N5-methylglutamine. Residues 281 to 307 (ERQRADSERSADRRSQVGSGDRSERIR) are compositionally biased toward basic and acidic residues. The segment at 281–311 (ERQRADSERSADRRSQVGSGDRSERIRTYNF) is disordered.

Belongs to the prokaryotic/mitochondrial release factor family. In terms of processing, methylated by PrmC. Methylation increases the termination efficiency of RF1.

It is found in the cytoplasm. Peptide chain release factor 1 directs the termination of translation in response to the peptide chain termination codons UAG and UAA. The chain is Peptide chain release factor 1 from Rhizobium meliloti (strain 1021) (Ensifer meliloti).